The sequence spans 202 residues: Small ribosomal subunit protein uS4c (202 aa).

The region spanning 90–153 is the S4 RNA-binding domain; sequence MRLDNIIFRL…KSETIISKNI (64 aa).

The protein belongs to the universal ribosomal protein uS4 family. Part of the 30S ribosomal subunit. Contacts protein S5. The interaction surface between S4 and S5 is involved in control of translational fidelity.

The protein resides in the plastid. It localises to the chloroplast. In terms of biological role, one of the primary rRNA binding proteins, it binds directly to 16S rRNA where it nucleates assembly of the body of the 30S subunit. Its function is as follows. With S5 and S12 plays an important role in translational accuracy. The protein is Small ribosomal subunit protein uS4c (rps4) of Catharomnion ciliatum (Moss).